The chain runs to 1009 residues: Putative receptor-like protein 8 (1009 aa).

A signal peptide spans 1-22 (MKTNFVILLLLLCVFAISPSQQ). At 23 to 961 (EEINQHNPGI…EEDDEAPVDM (939 aa)) the chain is on the extracellular side. N-linked (GlcNAc...) asparagine glycosylation is found at Asn159 and Asn197. Residues 204 to 231 (FEEVRSLELSAGLNGFVDNVEGYKSLRK) form an LRR 1; degenerate repeat. LRR repeat units follow at residues 232-255 (LKNL…PFIN), 257-281 (ATSL…EIKD), 282-305 (LTNL…LTHL), 306-329 (KKLK…VVCE), 331-354 (KNLW…LGRL), 355-377 (NKLR…TFNR), 379-402 (ESLE…PLAN), 404-427 (TKLK…SEPK), 442-465 (LEKI…ATIV), 466-490 (HELQ…GYAL), 492-514 (NLLR…MGEM), 515-538 (VNIT…FVTG), 540-565 (FSLK…SFTS), 567-587 (EELR…LLSS), 588-612 (NTTL…MSNL), 613-636 (SGLT…LLAI), 638-660 (FLSL…VGGE), 662-681 (GIKL…DTLL), 682-705 (EKVQ…VNTE), 707-728 (IYIL…LCDL), 729-752 (RNIR…LYNL), 819-842 (LDYM…ELGS), 843-866 (LSKL…SFSN), 867-891 (LKDI…LTNL), and 893-916 (SLVV…QFNT). N-linked (GlcNAc...) asparagine glycosylation is present at Asn267. Residues Asn390 and Asn402 are each glycosylated (N-linked (GlcNAc...) asparagine). 4 N-linked (GlcNAc...) asparagine glycosylation sites follow: Asn497, Asn516, Asn526, and Asn551. 2 N-linked (GlcNAc...) asparagine glycosylation sites follow: Asn588 and Asn611. N-linked (GlcNAc...) asparagine glycans are attached at residues Asn716 and Asn751. Residues Asn850, Asn890, Asn903, and Asn934 are each glycosylated (N-linked (GlcNAc...) asparagine). The tract at residues 934 to 955 (NRSCDAKKTSDESENGGEEEDD) is disordered. Residues 945–955 (ESENGGEEEDD) show a composition bias toward acidic residues. Residues 962–982 (LAFYFSSASTYVTTLIGIFIL) form a helical membrane-spanning segment. Residues 983–1009 (MCFDCPLRRAWLRIVDASIASVKSMLP) are Cytoplasmic-facing.

Belongs to the RLP family.

The protein localises to the cell membrane. The sequence is that of Putative receptor-like protein 8 from Arabidopsis thaliana (Mouse-ear cress).